A 427-amino-acid chain; its full sequence is Queuine tRNA-ribosyltransferase catalytic subunit (427 aa).

The active-site Proton acceptor is D99. Substrate contacts are provided by residues D99–F103, D153, Q196, and G223. The RNA binding stretch occupies residues G254–D260. D273 serves as the catalytic Nucleophile. Residues T278–R282 are RNA binding; important for wobble base 34 recognition. The Zn(2+) site is built by C311, C313, C316, and H341. The segment at P395–S427 is disordered. The span at D397–E417 shows a compositional bias: basic and acidic residues.

The protein belongs to the queuine tRNA-ribosyltransferase family. Heterodimer of a catalytic subunit and an accessory subunit. Requires Zn(2+) as cofactor.

It localises to the cytoplasm. The enzyme catalyses guanosine(34) in tRNA + queuine = queuosine(34) in tRNA + guanine. Its function is as follows. Catalytic subunit of the queuine tRNA-ribosyltransferase (TGT) that catalyzes the base-exchange of a guanine (G) residue with queuine (Q) at position 34 (anticodon wobble position) in tRNAs with GU(N) anticodons (tRNA-Asp, -Asn, -His and -Tyr), resulting in the hypermodified nucleoside queuosine (7-(((4,5-cis-dihydroxy-2-cyclopenten-1-yl)amino)methyl)-7-deazaguanosine). Catalysis occurs through a double-displacement mechanism. The nucleophile active site attacks the C1' of nucleotide 34 to detach the guanine base from the RNA, forming a covalent enzyme-RNA intermediate. The proton acceptor active site deprotonates the incoming queuine, allowing a nucleophilic attack on the C1' of the ribose to form the product. The sequence is that of Queuine tRNA-ribosyltransferase catalytic subunit (Tgt) from Drosophila melanogaster (Fruit fly).